The sequence spans 314 residues: Leucine-rich repeat-containing protein 52 (314 aa).

The first 23 residues, 1–23, serve as a signal peptide directing secretion; that stretch reads MSLASGPSSKLLLFSLGMGLVSG. Residues 24–53 form the LRRNT domain; that stretch reads SKCPNKCVCQDQEVACIDLHLTEYPADIPL. Residues 24–244 lie on the Extracellular side of the membrane; the sequence is SKCPNKCVCQ…MCITHLDQQD (221 aa). 2 cysteine pairs are disulfide-bonded: C26–C32 and C30–C39. LRR repeat units lie at residues 54–73, 78–99, 102–123, 126–148, and 151–172; these read NTRR…ALQL, DLVY…TFIG, RLIY…SFSV, NLVR…VFAN, and SLRY…GFHH. 3 N-linked (GlcNAc...) asparagine glycosylation sites follow: N112, N131, and N148. One can recognise an LRRCT domain in the interval 184–238; that stretch reads NPWICNCSFLDFTIHLLVSHMDHPDAQNATCTEPAELKGWPITKVGNPLQYMCIT. 2 disulfides stabilise this stretch: C188–C214 and C190–C236. N-linked (GlcNAc...) asparagine glycans are attached at residues N189 and N211. The chain crosses the membrane as a helical span at residues 245–265; sequence YIFLLLIGFCIFAAGTVAAWL. Topologically, residues 266–314 are cytoplasmic; sequence TGVCAVLYQNALRTSSGDDTEDETGSRFANQIFRSNTHLGPIRRFPELI.

In terms of assembly, interacts with KCNMA1. Interacts with KCNU1; this interaction may be required for LRRC52 stability and changes the channel gating properties. N-glycosylated. As to expression, testis-specific (at protein level). At the mRNA level, also detected in kidney, ventricle, spinal cord and skeletal muscle, although at lower levels compared to testis. Expression in testis at the protein level requires the presence of KCNU1.

The protein localises to the cell membrane. Its function is as follows. Auxiliary protein of the large-conductance, voltage and calcium-activated potassium channel (BK alpha). Modulates gating properties by producing a marked shift in the BK channel's voltage dependence of activation in the hyperpolarizing direction, and in the absence of calcium. KCNU1 channel auxiliary protein. Modulates KCNU1 gating properties, shifting KCNU1 gating to more negative potentials at a given pH. The chain is Leucine-rich repeat-containing protein 52 (Lrrc52) from Mus musculus (Mouse).